The following is a 216-amino-acid chain: 3-isopropylmalate dehydratase small subunit (216 aa).

Belongs to the LeuD family. LeuD type 1 subfamily. In terms of assembly, heterodimer of LeuC and LeuD.

It catalyses the reaction (2R,3S)-3-isopropylmalate = (2S)-2-isopropylmalate. It participates in amino-acid biosynthesis; L-leucine biosynthesis; L-leucine from 3-methyl-2-oxobutanoate: step 2/4. Catalyzes the isomerization between 2-isopropylmalate and 3-isopropylmalate, via the formation of 2-isopropylmaleate. This is 3-isopropylmalate dehydratase small subunit from Acidovorax ebreus (strain TPSY) (Diaphorobacter sp. (strain TPSY)).